We begin with the raw amino-acid sequence, 182 residues long: UPF0149 protein CGSHiEE_07975 (182 aa).

It belongs to the UPF0149 family.

The chain is UPF0149 protein CGSHiEE_07975 from Haemophilus influenzae (strain PittEE).